The following is a 286-amino-acid chain: Protein NipSnap homolog 2 (286 aa).

Residues M1–P23 constitute a mitochondrion transit peptide.

Belongs to the NipSnap family. Interacts with CALCOCO2/NDP52, NBR1, SQSTM1/p62, TAX1BP1 and WDFY3/ALFY. Interacts with ATG8 family proteins (MAP1LC3A, MAP1LC3B, MAP1LC3C, GABARAP, GABARAPL1 and GABARAPL2). Interacts with VDAC1. In terms of tissue distribution, widely expressed. Most abundant in heart and skeletal muscle.

Its subcellular location is the mitochondrion matrix. In terms of biological role, protein involved in mitophagy by facilitating recruitment of the autophagy machinery required for clearance of damaged mitochondria. Accumulates on the mitochondria surface in response to mitochondrial depolarization and acts as a 'eat me' signal by recruiting proteins involved in selective autophagy, such as autophagy receptors (CALCOCO2/NDP52, NBR1, SQSTM1/p62, TAX1BP1 and WDFY3/ALFY) and ATG8 family proteins (MAP1LC3A, MAP1LC3B, MAP1LC3C, GABARAP, GABARAPL1 and GABARAPL2). This is Protein NipSnap homolog 2 from Homo sapiens (Human).